We begin with the raw amino-acid sequence, 704 residues long: Elongation factor G 1 (704 aa).

Positions 8–291 constitute a tr-type G domain; that stretch reads ERYRNIGISA…AVIDYLPSPA (284 aa). GTP-binding positions include 17–24, 88–92, and 142–145; these read AHIDAGKT, DTPGH, and NKMD.

This sequence belongs to the TRAFAC class translation factor GTPase superfamily. Classic translation factor GTPase family. EF-G/EF-2 subfamily.

It is found in the cytoplasm. Functionally, catalyzes the GTP-dependent ribosomal translocation step during translation elongation. During this step, the ribosome changes from the pre-translocational (PRE) to the post-translocational (POST) state as the newly formed A-site-bound peptidyl-tRNA and P-site-bound deacylated tRNA move to the P and E sites, respectively. Catalyzes the coordinated movement of the two tRNA molecules, the mRNA and conformational changes in the ribosome. The polypeptide is Elongation factor G 1 (Burkholderia pseudomallei (strain 1710b)).